Reading from the N-terminus, the 339-residue chain is Serpentine receptor class alpha-20 (339 aa).

The next 6 membrane-spanning stretches (helical) occupy residues 30 to 50 (VSFV…VLAI), 113 to 132 (LYFY…SLTF), 151 to 171 (VSIS…YFGL), 199 to 219 (FRTT…YLNV), 249 to 269 (CILI…VNYI), and 284 to 304 (IAPF…VIYF).

The protein belongs to the nematode receptor-like protein sra family.

The protein resides in the membrane. This chain is Serpentine receptor class alpha-20 (sra-20), found in Caenorhabditis elegans.